Consider the following 419-residue polypeptide: Serine hydroxymethyltransferase 2 (419 aa).

(6S)-5,6,7,8-tetrahydrofolate contacts are provided by residues Leu120 and 124-126; that span reads GHL. At Lys229 the chain carries N6-(pyridoxal phosphate)lysine.

It belongs to the SHMT family. Homodimer. It depends on pyridoxal 5'-phosphate as a cofactor.

It localises to the cytoplasm. It carries out the reaction (6R)-5,10-methylene-5,6,7,8-tetrahydrofolate + glycine + H2O = (6S)-5,6,7,8-tetrahydrofolate + L-serine. The protein operates within one-carbon metabolism; tetrahydrofolate interconversion. It participates in amino-acid biosynthesis; glycine biosynthesis; glycine from L-serine: step 1/1. Catalyzes the reversible interconversion of serine and glycine with tetrahydrofolate (THF) serving as the one-carbon carrier. This reaction serves as the major source of one-carbon groups required for the biosynthesis of purines, thymidylate, methionine, and other important biomolecules. Also exhibits THF-independent aldolase activity toward beta-hydroxyamino acids, producing glycine and aldehydes, via a retro-aldol mechanism. The chain is Serine hydroxymethyltransferase 2 from Salmonella typhi.